A 508-amino-acid polypeptide reads, in one-letter code: Probable cytosol aminopeptidase (508 aa).

Lysine 274 and aspartate 279 together coordinate Mn(2+). Lysine 286 is a catalytic residue. Residues aspartate 297, aspartate 356, and glutamate 358 each coordinate Mn(2+). Residue arginine 360 is part of the active site.

The protein belongs to the peptidase M17 family. Mn(2+) serves as cofactor.

It localises to the cytoplasm. It carries out the reaction Release of an N-terminal amino acid, Xaa-|-Yaa-, in which Xaa is preferably Leu, but may be other amino acids including Pro although not Arg or Lys, and Yaa may be Pro. Amino acid amides and methyl esters are also readily hydrolyzed, but rates on arylamides are exceedingly low.. The enzyme catalyses Release of an N-terminal amino acid, preferentially leucine, but not glutamic or aspartic acids.. Presumably involved in the processing and regular turnover of intracellular proteins. Catalyzes the removal of unsubstituted N-terminal amino acids from various peptides. The protein is Probable cytosol aminopeptidase of Paraburkholderia xenovorans (strain LB400).